We begin with the raw amino-acid sequence, 228 residues long: MQNRWKDWVHVTKLDPDKSLPPAVIDEIATSGTDALMLSGTLNVTIENLGHLFKQVAQYGLPLVVEPAGPEAVLCEGIDLLFVPSVMNSNSVQWIVGKHQQWAQQSSIRWDKVIPEAYIVLNSSSSVGKVTGADCGLTPAEAAAYASVADHYFRFPIVYVEYSGMYGDPKMVRSIAEVVDRAILYYGGGISSADKAAEMGRWADTIVVGNAVYDLGPDVLRATVKAVQ.

A sn-glycerol 1-phosphate-binding site is contributed by Lys-13. The Mg(2+) site is built by Asp-15 and Thr-41. Sn-glycerol 1-phosphate is bound by residues 159-164 (YVEYSG), Gly-189, and 209-210 (GN).

The protein belongs to the GGGP/HepGP synthase family. Group I subfamily. Mg(2+) is required as a cofactor.

Its subcellular location is the cytoplasm. The enzyme catalyses sn-glycerol 1-phosphate + (2E,6E,10E)-geranylgeranyl diphosphate = sn-3-O-(geranylgeranyl)glycerol 1-phosphate + diphosphate. The protein operates within membrane lipid metabolism; glycerophospholipid metabolism. Prenyltransferase that catalyzes the transfer of the geranylgeranyl moiety of geranylgeranyl diphosphate (GGPP) to the C3 hydroxyl of sn-glycerol-1-phosphate (G1P). This reaction is the first ether-bond-formation step in the biosynthesis of archaeal membrane lipids. This is Geranylgeranylglyceryl phosphate synthase from Methanosphaerula palustris (strain ATCC BAA-1556 / DSM 19958 / E1-9c).